The primary structure comprises 37 residues: Calcitonin gene-related peptide 1 (37 aa).

Cysteine 2 and cysteine 7 are joined by a disulfide. Position 37 is a phenylalanine amide (phenylalanine 37).

This sequence belongs to the calcitonin family.

Its subcellular location is the secreted. Functionally, CGRP1/CALCA is a peptide hormone that induces vasodilation mediated by the CALCRL-RAMP1 receptor complex. Dilates a variety of vessels including the coronary, cerebral and systemic vasculature. Its abundance in the CNS also points toward a neurotransmitter or neuromodulator role. It also elevates platelet cAMP. CGRP1 can also bind and activate CALCR-RAMP1 (AMYR1) receptor complex. This Ovis aries (Sheep) protein is Calcitonin gene-related peptide 1 (CALCA).